We begin with the raw amino-acid sequence, 680 residues long: Putative E3 ubiquitin-protein ligase UNKL (680 aa).

The disordered stretch occupies residues 1–22; the sequence is MPSVSKAAAAALSGSPPQTEKP. 4 consecutive C3H1-type zinc fingers follow at residues 75 to 104, 115 to 145, 243 to 277, and 283 to 310; these read YSPD…HRTT, YYKT…HGPL, QYRS…HSRT, and PEST…HVEK. 4 stretches are compositionally biased toward low complexity: residues 326–337, 375–396, 465–497, and 545–562; these read TSPSSTGSGQPG, VSSS…SPTA, SLPR…VGSS, and SPSP…SASP. Disordered stretches follow at residues 326–358, 375–400, 442–520, and 545–566; these read TSPS…QDSK, VSSS…LPAP, DGHD…SAAS, and SPSP…NGAE. Residues 563–619 are a coiled coil; it reads NGAELARVRRQLDEAKRKIRQWEESWQQVKQVCDAWQREAQEAKERARVADSDRQLA. An RING-type zinc finger spans residues 639–674; that stretch reads CVACRERAHGAVLRPCQHHILCEPCAATAPECPYCK.

It belongs to the unkempt family. Isoform 4 (C-terminal) interacts with the GTP-bound form of RAC1. Isoform 4 (C-terminal) interacts with SMARCD2/BAF60b. Post-translationally, isoform 4 is ubiquitinated in the C-terminal. Ubiquitination is enhanced by activated RAC1. The presence of the RING finger domain is not essential for ubiquitination to occur.

The protein resides in the cytoplasm. The protein localises to the nucleus. It participates in protein modification; protein ubiquitination. Functionally, may participate in a protein complex showing an E3 ligase activity regulated by RAC1. Ubiquitination is directed towards itself and possibly other substrates, such as SMARCD2/BAF60b. Intrinsic E3 ligase activity has not been proven. The chain is Putative E3 ubiquitin-protein ligase UNKL (UNKL) from Homo sapiens (Human).